The following is a 417-amino-acid chain: Histidine--tRNA ligase (417 aa).

It belongs to the class-II aminoacyl-tRNA synthetase family.

The protein resides in the cytoplasm. The enzyme catalyses tRNA(His) + L-histidine + ATP = L-histidyl-tRNA(His) + AMP + diphosphate + H(+). This chain is Histidine--tRNA ligase, found in Pyrobaculum neutrophilum (strain DSM 2338 / JCM 9278 / NBRC 100436 / V24Sta) (Thermoproteus neutrophilus).